We begin with the raw amino-acid sequence, 263 residues long: Adaptin ear-binding coat-associated protein 2 (263 aa).

2 disordered regions span residues 167–191 (KKEGAAGAPRTRPASAGGLSLLPPP) and 209–263 (GGSL…WVQF). Ser181 is modified (phosphoserine). Short sequence motifs (WXXF motif) lie at residues 218–221 (GSGG) and 238–241 (DIWG). Low complexity predominate over residues 246–263 (STGSPSSQSQPGTGWVQF).

The protein belongs to the NECAP family. Interacts with AP1G1 and AP2A1 components of the adapter protein complexes AP-1 and AP-2. Interacts with the GAE domain proteins GGA1, GGA2 and GGA3. As to expression, expressed in brain, heart, kidney, liver and lung (at protein level).

The protein localises to the cytoplasmic vesicle. It localises to the clathrin-coated vesicle membrane. Its subcellular location is the cell membrane. Its function is as follows. Involved in endocytosis. This chain is Adaptin ear-binding coat-associated protein 2 (Necap2), found in Rattus norvegicus (Rat).